The following is a 577-amino-acid chain: Phosphoenolpyruvate-protein phosphotransferase (577 aa).

The active-site Tele-phosphohistidine intermediate is the H191. Phosphoenolpyruvate-binding residues include R298 and R334. Residues E435 and D459 each contribute to the Mg(2+) site. Residues 458–459 (ND) and R469 each bind phosphoenolpyruvate. C506 acts as the Proton donor in catalysis.

Belongs to the PEP-utilizing enzyme family. Homodimer. It depends on Mg(2+) as a cofactor.

It is found in the cytoplasm. The enzyme catalyses L-histidyl-[protein] + phosphoenolpyruvate = N(pros)-phospho-L-histidyl-[protein] + pyruvate. Its function is as follows. General (non sugar-specific) component of the phosphoenolpyruvate-dependent sugar phosphotransferase system (sugar PTS). This major carbohydrate active-transport system catalyzes the phosphorylation of incoming sugar substrates concomitantly with their translocation across the cell membrane. Enzyme I transfers the phosphoryl group from phosphoenolpyruvate (PEP) to the phosphoryl carrier protein (HPr). The polypeptide is Phosphoenolpyruvate-protein phosphotransferase (ptsI) (Streptococcus equinus (Streptococcus bovis)).